The primary structure comprises 95 residues: MNLKPLADRVIVKPAPAEEKTKGGLYIPDTGKEKPMYGEVVAVGAGKMSDSGQLLAMPVKAGDKVLYGKYSGTEVSVEGEDYLIMRESDIFAILA.

This sequence belongs to the GroES chaperonin family. Heptamer of 7 subunits arranged in a ring. Interacts with the chaperonin GroEL.

It localises to the cytoplasm. In terms of biological role, together with the chaperonin GroEL, plays an essential role in assisting protein folding. The GroEL-GroES system forms a nano-cage that allows encapsulation of the non-native substrate proteins and provides a physical environment optimized to promote and accelerate protein folding. GroES binds to the apical surface of the GroEL ring, thereby capping the opening of the GroEL channel. In Chlorobium luteolum (strain DSM 273 / BCRC 81028 / 2530) (Pelodictyon luteolum), this protein is Co-chaperonin GroES.